The following is a 782-amino-acid chain: MDYSIATLLSYFVDDKLVAGKFLEKKLGCESPEAIEALQIALDALEKMGVLVKERGKYNRVTREDVVEARLRCSSKGFCFAIQDDEDATDIYVREGNLSNAWNGDRVLVKVIKDGTRRKSPEEQVHLILDRANPSLLAQVKKSEDNYRAVPLDDRLLFELELQDKEQNLGEAVDHLVHVSVLRYPIAQHPPLGEVTKVLGSDAEAAADTDIVSCKHDLPLGWTPEAIEALQSLPKVIEPGELKKRTWITAKLQLVTFGDGPRGETLPWQEVALSLESQANQWQVGIHITDIAHYIAEDSLLDQLARKRGTTVYLEEQICPLFPEGLIGRCSLIPDEDRLALSFFLTVDDRGEVTGFEYHSSVVKVDHQLDFSEVQTALADIESVSGELKPYGGLLQELFFQICPLIKSQRLQRGSFNLQTETASPRLDEGRLGVIMTQETLPIRSLLAELMVVLQREVALQLQALGIPGLYCGQVAPEGEDLTDIVKLAGNLDLGVKIDLEGDIIPQHYHHLSQGFESLPAKAVLNHLLANTLKIEKYFSHPAPHFALAYDSGYTHCVSPAQRYGDLVIQRLLKLVLTEGRDRRTKQMKTGVELNAHTCRNQISWNVLPPNLQETIEGDLHQLVLGLNDREQTAEDAEKDLLGLKKAEKMKARAGEIFRGLITGVQSYGFFVQIFDLLAEGLVHVSSLKDDWYEFRSRQCALVGRKSRTSYRLGNEVDVQVRSVDYYRQQIDLGAVNNAPKDSANMDFDDDDEDGDEREEQDTMDWDAMEDGDDDEGGAVIF.

One can recognise an RNB domain in the interval 270–579 (EVALSLESQA…QRLLKLVLTE (310 aa)). Residues 655 to 736 (GEIFRGLITG…YRQQIDLGAV (82 aa)) form the S1 motif domain. The disordered stretch occupies residues 737–782 (NNAPKDSANMDFDDDDEDGDEREEQDTMDWDAMEDGDDDEGGAVIF). The span at 747-782 (DFDDDDEDGDEREEQDTMDWDAMEDGDDDEGGAVIF) shows a compositional bias: acidic residues.

It belongs to the RNR ribonuclease family.

In terms of biological role, not known; control resistance to the carbonic anhydrase inhibitor acetazolamide. This is Acetazolamide conferring resistance protein zam (zam) from Synechocystis sp. (strain ATCC 27184 / PCC 6803 / Kazusa).